A 266-amino-acid chain; its full sequence is Dihydropteroate synthase (266 aa).

In terms of domain architecture, Pterin-binding spans 12–260 (AAIMGILNVT…DVKANQEIVA (249 aa)). Residue asparagine 19 coordinates Mg(2+). Residues threonine 59, aspartate 93, asparagine 112, aspartate 176, lysine 212, and 248 to 250 (RVH) contribute to the (7,8-dihydropterin-6-yl)methyl diphosphate site.

The protein belongs to the DHPS family. As to quaternary structure, homodimer or homotrimer. Requires Mg(2+) as cofactor.

The catalysed reaction is (7,8-dihydropterin-6-yl)methyl diphosphate + 4-aminobenzoate = 7,8-dihydropteroate + diphosphate. It participates in cofactor biosynthesis; tetrahydrofolate biosynthesis; 7,8-dihydrofolate from 2-amino-4-hydroxy-6-hydroxymethyl-7,8-dihydropteridine diphosphate and 4-aminobenzoate: step 1/2. In terms of biological role, catalyzes the condensation of para-aminobenzoate (pABA) with 6-hydroxymethyl-7,8-dihydropterin diphosphate (DHPt-PP) to form 7,8-dihydropteroate (H2Pte), the immediate precursor of folate derivatives. The protein is Dihydropteroate synthase (folP) of Streptococcus pyogenes.